The following is a 205-amino-acid chain: Protein Nef (205 aa).

A lipid anchor (N-myristoyl glycine; by host) is attached at Gly-2. The residue at position 6 (Ser-6) is a Phosphoserine; by host. The tract at residues 61–65 (EESEE) is acidic; interacts with host PACS1 and PACS2; stabilizes the interaction of NEF/MHC-I with host AP1M1; necessary for MHC-I internalization. The tract at residues 69 to 78 (PVRPQVPLRP) is SH3-binding; interaction with Src family tyrosine kinases. Positions 72 to 75 (PQVP) match the PxxP; stabilizes the interaction of NEF/MHC-I with host AP1M1; necessary for MHC-I internalization motif. The segment at 108–124 (EILDLWVYHTQGFFPDW) is mediates dimerization, Nef-PTE1 interaction. The interval 148 to 180 (VDPREVEEANTGENNCLLHPMSQHGMDDDEREV) is binding to ATP6V1H. Positions 164 to 165 (LL) match the Dileucine internalization motif; necessary for CD4 internalization motif. Residues 174-175 (DD) carry the Diacidic; necessary for CD4 internalization motif.

Belongs to the lentivirus primate group Nef protein family. Monomer; cytosolic form. Homodimer; membrane bound form. Interacts with Nef associated p21-activated kinase (PAK2); this interaction activates PAK2. Associates with the Nef-MHC-I-AP1 complex; this complex is required for MHC-I internalization. Interacts (via C-terminus) with host PI3-kinase. Interacts with host PACS1; this interaction seems to be weak. Interacts with host PACS2. Interacts with host LCK and MAPK3; these interactions inhibit the kinase activity of the latter. Interacts with host ATP6V1H; this interaction may play a role in CD4 endocytosis. Associates with the CD4-Nef-AP2 complex; this complex is required for CD4 internalization. Interacts with host AP2 subunit alpha and AP2 subunit sigma2. Interacts with TCR-zeta chain; this interaction up-regulates the Fas ligand (FasL) surface expression. Interacts with host HCK, LYN, and SRC; these interactions activate the Src family kinases. Interacts with MAP3K5; this interaction inhibits the Fas and TNFR-mediated death signals. Interacts with beta-COP and PTE1. Interacts with human RACK1; this increases Nef phosphorylation by PKC. Interacts with TP53; this interaction decreases the half-life of TP53, protecting the infected cell against p53-mediated apoptosis. Post-translationally, the virion-associated Nef proteins are cleaved by the viral protease to release the soluble C-terminal core protein. Nef is probably cleaved concomitantly with viral structural proteins on maturation of virus particles. In terms of processing, myristoylated. Phosphorylated on serine residues, probably by host PKCdelta and theta.

Its subcellular location is the host cell membrane. The protein resides in the virion. It localises to the secreted. The protein localises to the host Golgi apparatus membrane. Factor of infectivity and pathogenicity, required for optimal virus replication. Alters numerous pathways of T-lymphocyte function and down-regulates immunity surface molecules in order to evade host defense and increase viral infectivity. Alters the functionality of other immunity cells, like dendritic cells, monocytes/macrophages and NK cells. Its function is as follows. In infected CD4(+) T-lymphocytes, down-regulates the surface MHC-I, mature MHC-II, CD4, CD28, CCR5 and CXCR4 molecules. Mediates internalization and degradation of host CD4 through the interaction of with the cytoplasmic tail of CD4, the recruitment of AP-2 (clathrin adapter protein complex 2), internalization through clathrin coated pits, and subsequent transport to endosomes and lysosomes for degradation. Diverts host MHC-I molecules to the trans-Golgi network-associated endosomal compartments by an endocytic pathway to finally target them for degradation. MHC-I down-regulation may involve AP-1 (clathrin adapter protein complex 1) or possibly Src family kinase-ZAP70/Syk-PI3K cascade recruited by PACS2. In consequence infected cells are masked for immune recognition by cytotoxic T-lymphocytes. Decreasing the number of immune receptors also prevents reinfection by more HIV particles (superinfection). Down-regulates host SERINC3 and SERINC5 thereby excluding these proteins from the viral particles. Virion infectivity is drastically higher when SERINC3 or SERINC5 are excluded from the viral envelope, because these host antiviral proteins impair the membrane fusion event necessary for subsequent virion penetration. In terms of biological role, bypasses host T-cell signaling by inducing a transcriptional program nearly identical to that of anti-CD3 cell activation. Interaction with TCR-zeta chain up-regulates the Fas ligand (FasL). Increasing surface FasL molecules and decreasing surface MHC-I molecules on infected CD4(+) cells send attacking cytotoxic CD8+ T-lymphocytes into apoptosis. Functionally, plays a role in optimizing the host cell environment for viral replication without causing cell death by apoptosis. Protects the infected cells from apoptosis in order to keep them alive until the next virus generation is ready to strike. Inhibits the Fas and TNFR-mediated death signals by blocking MAP3K5/ASK1. Decreases the half-life of TP53, protecting the infected cell against p53-mediated apoptosis. Inhibits the apoptotic signals regulated by the Bcl-2 family proteins through the formation of a Nef/PI3-kinase/PAK2 complex that leads to activation of PAK2 and induces phosphorylation of host BAD. Extracellular Nef protein targets CD4(+) T-lymphocytes for apoptosis by interacting with CXCR4 surface receptors. This chain is Protein Nef, found in Human immunodeficiency virus type 1 group M subtype A (isolate Z321) (HIV-1).